Here is a 352-residue protein sequence, read N- to C-terminus: MAGLKTFDAFPKTEEQYKKKSTKGGLTSLLTYLFLLFIAWTEFGEYFGGYIDQQYVVDSQVRDTVQINMDIYVNTKCDWLQINVRDQTMDRKLVLEELQLEEMPFFIPYDTKVNDINEIITPELDEILGEAIPAEFREKLDTRSFFDESDPNKAHLPEFNGCHVFGSIPVNRVSGELQITAKSLGYVASRKAPLEELKFNHVINEFSFGDFYPYIDNPLDNTAQFNQDEPLTTYVYYTSVVPTLFKKLGAEVDTNQYSVNDYRYLYKDVAAKGDKMPGIFFKYNFEPLSIVVSDVRLSFIQFLVRLVAICSFLVYCASWIFTLLDMALITIMGPKWSLRYQPDDKTKGILDR.

Residues 1 to 23 (MAGLKTFDAFPKTEEQYKKKSTK) lie on the Cytoplasmic side of the membrane. The helical transmembrane segment at 24-44 (GGLTSLLTYLFLLFIAWTEFG) threads the bilayer. The Lumenal segment spans residues 45 to 311 (EYFGGYIDQQ…FLVRLVAICS (267 aa)). A helical transmembrane segment spans residues 312-332 (FLVYCASWIFTLLDMALITIM). Over 333–352 (GPKWSLRYQPDDKTKGILDR) the chain is Cytoplasmic. The short motif at 349–350 (IL) is the Isoleucine-leucine motif element.

This sequence belongs to the ERGIC family. As to quaternary structure, interacts with ERV46.

Its subcellular location is the endoplasmic reticulum membrane. The protein localises to the golgi apparatus membrane. It is found in the cytoplasmic vesicle. The protein resides in the COPII-coated vesicle membrane. Functionally, constituent of COPII-coated endoplasmic reticulum-derived transport vesicles. Required for efficient transport of a subset of secretory proteins to the Golgi. The C-terminal Ile-Leu motif is required for exit from the endoplasmic reticulum. Facilitates retrograde transport from the Golgi to the endoplasmic reticulum. The polypeptide is ER-derived vesicles protein ERV41 (ERV41) (Saccharomyces cerevisiae (strain ATCC 204508 / S288c) (Baker's yeast)).